Here is a 345-residue protein sequence, read N- to C-terminus: MSYLIKPKNYKPLLDLKQTELGIKQIKEFFQLNLSSELRLRRVTAPLFVLKGMGINDDLNGIERPVSFPIKDLGDAQAEVVHSLAKWKRLTLADYNIEPGYGIYTDMNAIRSDEELGNLHSLYVDQWDWERVITNEDRNVEFLKEIVNRIYAAMIRTEYMVYEMYPQIKPCLPQKLHFIHSEELRQLYPNLEPKCREHAICQKYGAVFIIGIGCKLSDGKKHDGRAPDYDDYTSTGLNNLPGLNGDLLLWDDVLQRSIELSSMGVRVDREALQRQLKEENEEERLKLYFHKRLMDDTLPLSIGGGIGQSRLCMFYLRKAHIGEIQASIWPEDMRKECEELDIHLI.

Belongs to the class-II aminoacyl-tRNA synthetase family. AsnA subfamily.

It is found in the cytoplasm. It carries out the reaction L-aspartate + NH4(+) + ATP = L-asparagine + AMP + diphosphate + H(+). The protein operates within amino-acid biosynthesis; L-asparagine biosynthesis; L-asparagine from L-aspartate (ammonia route): step 1/1. This Bacteroides thetaiotaomicron (strain ATCC 29148 / DSM 2079 / JCM 5827 / CCUG 10774 / NCTC 10582 / VPI-5482 / E50) protein is Aspartate--ammonia ligase.